Consider the following 320-residue polypeptide: Homoserine kinase (320 aa).

ATP is bound at residue 100 to 110 (PLSSGMGSSAA).

It belongs to the GHMP kinase family. Homoserine kinase subfamily.

It is found in the cytoplasm. It carries out the reaction L-homoserine + ATP = O-phospho-L-homoserine + ADP + H(+). Its pathway is amino-acid biosynthesis; L-threonine biosynthesis; L-threonine from L-aspartate: step 4/5. Functionally, catalyzes the ATP-dependent phosphorylation of L-homoserine to L-homoserine phosphate. The chain is Homoserine kinase from Chlorobium phaeovibrioides (strain DSM 265 / 1930) (Prosthecochloris vibrioformis (strain DSM 265)).